The sequence spans 427 residues: Putative transporter YdfJ (427 aa).

At 1-7 (MDFQLYS) the chain is on the cytoplasmic side. A run of 2 helical transmembrane segments spans residues 8–28 (LGAA…AMAL) and 29–49 (ILAM…AFIF). Over 50 to 74 (GKMGDRIGRKKVLFITITMMGICTT) the chain is Cytoplasmic. Residues 75 to 95 (LIGVLPTYAQIGVFAPILLVT) form a helical membrane-spanning segment. Residues 96-97 (LR) lie on the Periplasmic side of the membrane. A helical membrane pass occupies residues 98–118 (IIQGLGAGAEISGAGTMLAEY). Topologically, residues 119–132 (APKGKRGIISSFVA) are cytoplasmic. The chain crosses the membrane as a helical span at residues 133–153 (MGTNCGTLSATAIWAFMFFIL). The Periplasmic portion of the chain corresponds to 154–157 (SKEE). The helical transmembrane segment at 158 to 178 (LLAWGWRIPFLASVVVMVFAI) threads the bilayer. Residues 179 to 225 (WLRMNLKESPVFEKVNDSNQPTAKPAPAGSMFQSKSFWLATGLRFGQ) lie on the Cytoplasmic side of the membrane. Residues 226 to 246 (AGNSGLIQTFLAGYLVQTLLF) traverse the membrane as a helical segment. Over 247–251 (NKAIP) the chain is Periplasmic. A helical membrane pass occupies residues 252 to 272 (TDALMISSILGFMTIPFLGWL). Residues 273–279 (SDKIGRR) are Cytoplasmic-facing. A helical membrane pass occupies residues 280 to 300 (IPYIIMNTSAIVLAWPMLSII). The Periplasmic portion of the chain corresponds to 301–307 (VDKSYAP). The helical transmembrane segment at 308–328 (STIMVALIVIHNCAVLGLFAL) threads the bilayer. Residues 329–351 (ENITMAEMFGCKNRFTRMAISKE) are Cytoplasmic-facing. Residues 352–372 (IGGLIASGFGPILAGIFCTMT) traverse the membrane as a helical segment. Residue glutamate 373 is a topological domain, periplasmic. The chain crosses the membrane as a helical span at residues 374 to 394 (SWYPIAIMIMAYSVIGLISAL). At 395-427 (KMPEVKDRDLSALEDAAEDQPRVVRAAQPSRSL) the chain is on the cytoplasmic side.

The protein belongs to the major facilitator superfamily. Metabolite:H+ Symporter (MHS) family (TC 2.A.1.6) family.

It is found in the cell inner membrane. Functionally, when overexpressed in human HEK-293 cells forms an inward rectifying potassium channel. This chain is Putative transporter YdfJ (ydfJ), found in Escherichia coli (strain K12).